Here is a 315-residue protein sequence, read N- to C-terminus: Olfactory receptor 10H5 (315 aa).

At 1–25 (MQGLNHTSVSEFILVGFSAFPHLQL) the chain is on the extracellular side. Asn-5 is a glycosylation site (N-linked (GlcNAc...) asparagine). Residues 26-46 (MLFLLFLLMYLFTLLGNLLIM) traverse the membrane as a helical segment. The Cytoplasmic portion of the chain corresponds to 47–54 (ATVWSERS). Residues 55–75 (LHMPMYLFLCALSITEILYTV) traverse the membrane as a helical segment. The Extracellular portion of the chain corresponds to 76 to 99 (AIIPRMLADLLSTQRSIAFLACAS). Cys-97 and Cys-189 are oxidised to a cystine. A helical transmembrane segment spans residues 100-120 (QMFFSFSFGFTHSFLLTVMGY). Over 121–139 (DRYVAICHPLRYNVLMSLR) the chain is Cytoplasmic. A helical membrane pass occupies residues 140 to 160 (GCTCRVGCSWAGGLVMGMVVT). Residues 161 to 197 (SAIFHLAFCGHKEIHHFFCHVPPLLKLACGDDVLVVA) are Extracellular-facing. Residues 198 to 218 (KGVGLVCITALLGCFLLILLS) traverse the membrane as a helical segment. Residues 219-238 (YAFIVAAILKIPSAEGRNKA) are Cytoplasmic-facing. The chain crosses the membrane as a helical span at residues 239–259 (FSTCASHLTVVVVHYGFASVI). Residues 260 to 272 (YLKPKGPQSPEGD) lie on the Extracellular side of the membrane. Residues 273-293 (TLMGITYTVLTPFLSPIIFSL) form a helical membrane-spanning segment. Residues 294–315 (RNKELKVAMKKTCFTKLFPQNC) lie on the Cytoplasmic side of the membrane.

The protein belongs to the G-protein coupled receptor 1 family.

The protein resides in the cell membrane. Functionally, odorant receptor. This chain is Olfactory receptor 10H5 (OR10H5), found in Homo sapiens (Human).